The chain runs to 241 residues: ATP synthase subunit a (241 aa).

The next 5 helical transmembrane spans lie at Gly-30–Gly-50, Phe-91–Trp-111, Ile-128–Ser-148, Leu-193–Leu-213, and Gly-214–Gly-234.

Belongs to the ATPase A chain family. In terms of assembly, F-type ATPases have 2 components, CF(1) - the catalytic core - and CF(0) - the membrane proton channel. CF(1) has five subunits: alpha(3), beta(3), gamma(1), delta(1), epsilon(1). CF(0) has four main subunits: a, b, b' and c.

Its subcellular location is the cellular thylakoid membrane. Functionally, key component of the proton channel; it plays a direct role in the translocation of protons across the membrane. The sequence is that of ATP synthase subunit a from Prochlorococcus marinus (strain MIT 9215).